The following is a 431-amino-acid chain: Gamma conglutin 1 (431 aa).

An N-terminal signal peptide occupies residues 1 to 24 (MASFLHNFLLFFCSLSLIILTSSA). One can recognise a Peptidase A1 domain in the interval 51-407 (HVVQIHKRTP…DLMNSRLGFS (357 aa)). 5 disulfides stabilise this stretch: Cys-79–Cys-168, Cys-93–Cys-106, Cys-98–Cys-123, Cys-109–Cys-118, and Cys-322–Cys-369.

Belongs to the peptidase A1 family. In terms of assembly, two-subunit monomeric unit made of alpha and beta subunits coupled by disulfide bonds (at pH 4.5 and under non-reducing conditions). Monomeric alpha and beta subunits in reducing conditions. Can also form oligomers including dimer, tetramer and cyclic hexamer (trimer of dimers) (at pH &gt; 5.5). Component of globulins complexes which accumulate in seeds. Interacts with flavonoids (e.g. apigenin glucosides) present in globulins complexes.

Its subcellular location is the secreted. It localises to the extracellular space. In terms of biological role, sulfur-rich seed storage protein that remains undegraded at germination. The chain is Gamma conglutin 1 from Prunus dulcis (Almond).